The sequence spans 208 residues: MAVYVVDHPLVKHKLGRLRQHDVPVSEFRAIANELCRLLAYEATKDLETEKVSVQGWAGPVEVDQIKGKKITAVPILRAGLGMLDGFLDMIPGAKVSVVGMFRNEETLEPVQYYTKLAKNIDERMAVILDPMLATGGTLDATIDLLKNAGCPQIKGLFLVAAPEGLKRIVDKHPDVDIYVAAVDERLNEHGYILPGLGDAGDKIFGTK.

Residues Arg78, Arg103, and 130 to 138 (DPMLATGGT) contribute to the 5-phospho-alpha-D-ribose 1-diphosphate site. Uracil contacts are provided by residues Ile193 and 198–200 (GDA). Asp199 is a 5-phospho-alpha-D-ribose 1-diphosphate binding site.

Belongs to the UPRTase family. It depends on Mg(2+) as a cofactor.

The enzyme catalyses UMP + diphosphate = 5-phospho-alpha-D-ribose 1-diphosphate + uracil. It functions in the pathway pyrimidine metabolism; UMP biosynthesis via salvage pathway; UMP from uracil: step 1/1. Its activity is regulated as follows. Allosterically activated by GTP. Its function is as follows. Catalyzes the conversion of uracil and 5-phospho-alpha-D-ribose 1-diphosphate (PRPP) to UMP and diphosphate. This is Uracil phosphoribosyltransferase from Nitratidesulfovibrio vulgaris (strain ATCC 29579 / DSM 644 / CCUG 34227 / NCIMB 8303 / VKM B-1760 / Hildenborough) (Desulfovibrio vulgaris).